The sequence spans 326 residues: Phospho-N-acetylmuramoyl-pentapeptide-transferase (326 aa).

The next 9 helical transmembrane spans lie at isoleucine 3–isoleucine 23, threonine 51–phenylalanine 71, valine 79–leucine 99, leucine 115–isoleucine 135, valine 138–valine 158, glycine 169–alanine 189, methionine 195–asparagine 215, valine 221–histidine 243, and phenylalanine 306–methionine 326.

Belongs to the glycosyltransferase 4 family. MraY subfamily. Mg(2+) is required as a cofactor.

The protein resides in the cell membrane. It carries out the reaction UDP-N-acetyl-alpha-D-muramoyl-L-alanyl-gamma-D-glutamyl-L-lysyl-D-alanyl-D-alanine + di-trans,octa-cis-undecaprenyl phosphate = Mur2Ac(oyl-L-Ala-gamma-D-Glu-L-Lys-D-Ala-D-Ala)-di-trans,octa-cis-undecaprenyl diphosphate + UMP. Its pathway is cell wall biogenesis; peptidoglycan biosynthesis. Functionally, catalyzes the initial step of the lipid cycle reactions in the biosynthesis of the cell wall peptidoglycan: transfers peptidoglycan precursor phospho-MurNAc-pentapeptide from UDP-MurNAc-pentapeptide onto the lipid carrier undecaprenyl phosphate, yielding undecaprenyl-pyrophosphoryl-MurNAc-pentapeptide, known as lipid I. The chain is Phospho-N-acetylmuramoyl-pentapeptide-transferase from Streptococcus pneumoniae serotype 2 (strain D39 / NCTC 7466).